Here is an 888-residue protein sequence, read N- to C-terminus: Aconitate hydratase A (888 aa).

Positions 433, 499, and 502 each coordinate [4Fe-4S] cluster.

This sequence belongs to the aconitase/IPM isomerase family. In terms of assembly, monomer. The cofactor is [4Fe-4S] cluster.

It catalyses the reaction citrate = D-threo-isocitrate. The catalysed reaction is (2S,3R)-3-hydroxybutane-1,2,3-tricarboxylate = 2-methyl-cis-aconitate + H2O. It participates in carbohydrate metabolism; tricarboxylic acid cycle; isocitrate from oxaloacetate: step 2/2. The protein operates within organic acid metabolism; propanoate degradation. Involved in the catabolism of short chain fatty acids (SCFA) via the tricarboxylic acid (TCA)(acetyl degradation route) and probably the 2-methylcitrate cycle I (propionate degradation route). Catalyzes the reversible isomerization of citrate to isocitrate via cis-aconitate. Could catalyze the hydration of 2-methyl-cis-aconitate to yield (2R,3S)-2-methylisocitrate. The apo form of AcnA functions as a RNA-binding regulatory protein. The polypeptide is Aconitate hydratase A (acn) (Streptococcus mutans serotype c (strain ATCC 700610 / UA159)).